The following is a 391-amino-acid chain: Transmembrane protein 79 (391 aa).

The interval 1–114 is disordered; it reads MTEPETLALL…TKSEEPFKED (114 aa). At 1–200 the chain is on the cytoplasmic side; it reads MTEPETLALL…GREALRAVAS (200 aa). Positions 103–114 are enriched in basic and acidic residues; sequence APTKSEEPFKED. A helical membrane pass occupies residues 201–221; it reads VVAALIFFPCLLYGAYAFLPF. The Extracellular segment spans residues 222–240; that stretch reads DAPRLPTMSSRLVYTLRCG. The helical transmembrane segment at 241-261 threads the bilayer; that stretch reads VFATFPIVLGLLVYGLSLLCF. Residues 262–279 are Cytoplasmic-facing; that stretch reads SALRPFGEPRREVEIHRQ. Residues 280-300 traverse the membrane as a helical segment; sequence YVAQSVQLFILYFFNLAVLST. At 301–309 the chain is on the extracellular side; the sequence is YLPQDTLKL. The chain crosses the membrane as a helical span at residues 310–330; that stretch reads LPLLTGLFAISRLIYWLTFAV. Residues 331–339 lie on the Cytoplasmic side of the membrane; that stretch reads GRSFRGFGY. Residues 340-360 form a helical membrane-spanning segment; sequence GLTFLPLLAMLVWNLYYMFVV. The Extracellular segment spans residues 361–391; sequence EPERMLTASESRLDYPDHARSVSDYRPRSWG.

As to expression, expressed in the epidermis of the skin. Expressed in epithelial cells of the outermost layer of the stratum granulosum (SG) and in hair follicles (at protein level).

It localises to the lysosome. Its subcellular location is the golgi apparatus. The protein localises to the trans-Golgi network. The protein resides in the membrane. In terms of biological role, contributes to the epidermal integrity and skin barrier function. Plays a role in the lamellar granule (LG) secretory system and in the stratum corneum (SC) epithelial cell formation. This chain is Transmembrane protein 79 (Tmem79), found in Mus musculus (Mouse).